A 310-amino-acid polypeptide reads, in one-letter code: Carbamate kinase 1 (310 aa).

In terms of assembly, homodimer (predominantly) and homotetramer.

It is found in the cytoplasm. The enzyme catalyses hydrogencarbonate + NH4(+) + ATP = carbamoyl phosphate + ADP + H2O + H(+). It participates in metabolic intermediate metabolism; carbamoyl phosphate degradation; CO(2) and NH(3) from carbamoyl phosphate: step 1/1. Its activity is regulated as follows. Inhibited by adenosine(5')pentaphospho(5')adenosine (Ap5A), Ap6A and to a much lower extent by Ap4A. Functionally, catalyzes the reversible synthesis of carbamate and ATP from carbamoyl phosphate and ADP. Can also catalyze, although with low efficiency, the phosphorylation of bicarbonate, leading to the formation of carboxyphosphate, an unstable intermediate found in the reactions catalyzed by carbamoyl-phosphate synthase and biotin carboxylase. Can also use acetate. The sequence is that of Carbamate kinase 1 (arcC1) from Enterococcus faecium (Streptococcus faecium).